The sequence spans 782 residues: Coiled-coil alpha-helical rod protein 1 (782 aa).

2 stretches are compositionally biased toward basic and acidic residues: residues 62-74 (ERDV…EPGR) and 208-218 (ETRRAGEAKEL). Disordered regions lie at residues 62–82 (ERDV…WGLE) and 185–218 (AHKE…AKEL). 3 coiled-coil regions span residues 82-314 (EGSQ…ELTR), 344-398 (LMVQ…EVER), and 498-691 (VTDV…QQEG).

The protein resides in the cytoplasm. Its subcellular location is the nucleus. Its function is as follows. May be a regulator of keratinocyte proliferation or differentiation. This Gorilla gorilla gorilla (Western lowland gorilla) protein is Coiled-coil alpha-helical rod protein 1 (CCHCR1).